Consider the following 615-residue polypeptide: DNA mismatch repair protein MutL (615 aa).

Positions 363–397 (FAEPAVREPVAPRYTPAPASGSRPAAPWPNAQPGY) are disordered. The segment covering 378 to 391 (PAPASGSRPAAPWP) has biased composition (low complexity).

It belongs to the DNA mismatch repair MutL/HexB family.

In terms of biological role, this protein is involved in the repair of mismatches in DNA. It is required for dam-dependent methyl-directed DNA mismatch repair. May act as a 'molecular matchmaker', a protein that promotes the formation of a stable complex between two or more DNA-binding proteins in an ATP-dependent manner without itself being part of a final effector complex. The chain is DNA mismatch repair protein MutL from Escherichia coli O157:H7.